A 267-amino-acid polypeptide reads, in one-letter code: Strigolactone esterase D14 (267 aa).

The active-site Nucleophile is Ser-97. Catalysis depends on residues Asp-218 and His-247.

It belongs to the AB hydrolase superfamily. As to quaternary structure, interacts with SMXL6, SMXL7 and SMXL8. The interaction with SMXLs occurs in the presence of (2'R) stereoisomers of strigolactones, but not (2'S) stereoisomers. Interacts with MAX2. Forms a complex with MAX2 and SKP1A/ASK1 in presence of strigolactone. Expressed at high levels in rosette and cauline leaves and at lower levels in axillary buds, inflorescences, stems, roots and developing vascular tissue of cotyledons.

The protein localises to the cytoplasm. Its subcellular location is the nucleus. In terms of biological role, involved in strigolactone signaling pathway. Does not move long distances acropetally in the plant to regulate shoot branching and is rapidly degraded in the presence of strigolactones. Functions downstream of strigolactone synthesis, as a component of hormone signaling and as an enzyme that participates in the conversion of strigolactones to the bioactive form. Acts probably as a strigolactone receptor. Strigolactones are hormones that inhibit tillering and shoot branching through the MAX-dependent pathway, contribute to the regulation of shoot architectural response to phosphate-limiting conditions and function as rhizosphere signal that stimulates hyphal branching of arbuscular mycorrhizal fungi and trigger seed germination of root parasitic weeds. Hydrolyzes methyl carlactonoate (MeCLA), but not carlactone (CL) or carlactonoic acid (CLA). Hydrolyzes the butenolide ring of strigolactones. The initial nucleophilic attack causes an electron shift, followed by the addition of a water molecule, to lead to the release of the ABC ring product and the formation of a 'Ser-97'-stabilized open lactone intermediate. Has no esterase activity for 4-nitrophenyl butyrate. Binds and hydrolyzes the synthetic strigolactone analog GR24 in vitro. Forms a stable covalent complex with the D-ring of strigolactone, which is essential for hormone bioactivity. The D-ring is attached to His-247 of the catalytic triad. The hydrolysis of strigolactone into a covalently linked intermediate molecule initiates a conformational change of D14 to facilitate interaction with MAX2 and formation of the D14-MAX2-SKP1/ASK1 complex to trigger strigolactone signaling. This mechanism defines D14 as a non-canonical hormone receptor with dual functions to generate and sense the active form of strigolactone. This is Strigolactone esterase D14 from Arabidopsis thaliana (Mouse-ear cress).